Here is a 743-residue protein sequence, read N- to C-terminus: 1,4-alpha-glucan branching enzyme GlgB (743 aa).

Aspartate 416 serves as the catalytic Nucleophile. Catalysis depends on glutamate 469, which acts as the Proton donor.

The protein belongs to the glycosyl hydrolase 13 family. GlgB subfamily. In terms of assembly, monomer.

The enzyme catalyses Transfers a segment of a (1-&gt;4)-alpha-D-glucan chain to a primary hydroxy group in a similar glucan chain.. The protein operates within glycan biosynthesis; glycogen biosynthesis. Functionally, catalyzes the formation of the alpha-1,6-glucosidic linkages in glycogen by scission of a 1,4-alpha-linked oligosaccharide from growing alpha-1,4-glucan chains and the subsequent attachment of the oligosaccharide to the alpha-1,6 position. This chain is 1,4-alpha-glucan branching enzyme GlgB, found in Shewanella baltica (strain OS195).